The primary structure comprises 306 residues: Protein YIPF1 (306 aa).

Residues 1–119 lie on the Cytoplasmic side of the membrane; it reads MAAVDDLQFE…VRLYIRSNPD (119 aa). Positions 14–62 are disordered; it reads NAATSLTANPDATTVNIEDPGETPKHQPGSPRGSGREEDDELLGNDDSD. The span at 15-29 shows a compositional bias: polar residues; that stretch reads AATSLTANPDATTVN. Residues 50–59 show a composition bias toward acidic residues; sequence EEDDELLGND. A helical transmembrane segment spans residues 120 to 140; it reads LYGPFWICATLVFAIAISGNL. The Lumenal segment spans residues 141 to 162; that stretch reads SNFLIHLGEKTYHYVPEFRKVS. Residues 163–183 form a helical membrane-spanning segment; it reads IAATIIYAYAWLVPLALWGFL. Over 184-200 the chain is Cytoplasmic; the sequence is MWRNSKVMNIVSYSFLE. The helical transmembrane segment at 201–221 threads the bilayer; the sequence is IVCVYGYSLFIYIPTAILWII. The Lumenal portion of the chain corresponds to 222 to 227; the sequence is PQKAVR. A helical transmembrane segment spans residues 228–248; sequence WILVMIALGISGSLLAMTFWP. Residues 249–256 are Cytoplasmic-facing; sequence AVREDNRR. The chain crosses the membrane as a helical span at residues 257-277; that stretch reads VALATIVTIVLLHMLLSVGCL. The Lumenal segment spans residues 278 to 306; the sequence is AYFFDAPEMDHLPTTTATPNQTVAAAKSS. Residue Asn-297 is glycosylated (N-linked (GlcNAc...) asparagine).

Belongs to the YIP1 family. As to quaternary structure, interacts with YIPF6; this interaction may stabilize YIPF1. May also form a ternary complex with YIPF2 and YIPF6.

It localises to the golgi apparatus. It is found in the cis-Golgi network membrane. The protein localises to the trans-Golgi network membrane. The protein resides in the late endosome membrane. In Homo sapiens (Human), this protein is Protein YIPF1 (YIPF1).